A 575-amino-acid polypeptide reads, in one-letter code: Probable ferredoxin/ferredoxin--NADP reductase (575 aa).

4Fe-4S ferredoxin-type domains follow at residues 2–29 (PHVI…PTPD) and 37–66 (EMLY…PNTR). [4Fe-4S] cluster-binding residues include Cys-9, Cys-15, Cys-19, Cys-46, Cys-49, Cys-52, and Cys-56. Positions 115–575 (VAVVGSGPAA…GQPIVLTVPL (461 aa)) are ferredoxin--NADP reductase. FAD-binding residues include Ala-123, Glu-143, Leu-151, and Ile-187. NADP(+) contacts are provided by residues Arg-213, 258-261 (NGNV), 302-303 (RR), and Glu-314. Residues Trp-456 and 463–465 (GFI) contribute to the FAD site. Gly-463 serves as a coordination point for NADP(+).

This sequence in the C-terminal section; belongs to the ferredoxin--NADP reductase family. It depends on [4Fe-4S] cluster as a cofactor. FAD is required as a cofactor.

It carries out the reaction 2 reduced [2Fe-2S]-[ferredoxin] + NADP(+) + H(+) = 2 oxidized [2Fe-2S]-[ferredoxin] + NADPH. The polypeptide is Probable ferredoxin/ferredoxin--NADP reductase (fprB) (Mycobacterium bovis (strain ATCC BAA-935 / AF2122/97)).